Reading from the N-terminus, the 207-residue chain is Protein-L-isoaspartate O-methyltransferase (207 aa).

Ser56 is a catalytic residue.

It belongs to the methyltransferase superfamily. L-isoaspartyl/D-aspartyl protein methyltransferase family.

Its subcellular location is the cytoplasm. It catalyses the reaction [protein]-L-isoaspartate + S-adenosyl-L-methionine = [protein]-L-isoaspartate alpha-methyl ester + S-adenosyl-L-homocysteine. Its function is as follows. Catalyzes the methyl esterification of L-isoaspartyl residues in peptides and proteins that result from spontaneous decomposition of normal L-aspartyl and L-asparaginyl residues. It plays a role in the repair and/or degradation of damaged proteins. The chain is Protein-L-isoaspartate O-methyltransferase from Pyrobaculum neutrophilum (strain DSM 2338 / JCM 9278 / NBRC 100436 / V24Sta) (Thermoproteus neutrophilus).